The sequence spans 244 residues: PHD finger protein ALFIN-LIKE 2 (244 aa).

Basic and acidic residues predominate over residues 137–148 (LSDRKHGRDNKS). The disordered stretch occupies residues 137-178 (LSDRKHGRDNKSGADNGSKSRHSGKRANDVQTKTSRPAVVDD). A PHD-type zinc finger spans residues 187–239 (ETLCGTCGGRYNANEFWIGCDICERWFHGKCVRITPAKAEHIKHYKCPDCSSS).

It belongs to the Alfin family. In terms of assembly, interacts with H3K4me3 and to a lesser extent with H3K4me2.

It localises to the nucleus. In terms of biological role, histone-binding component that specifically recognizes H3 tails trimethylated on 'Lys-4' (H3K4me3), which mark transcription start sites of virtually all active genes. This Oryza sativa subsp. indica (Rice) protein is PHD finger protein ALFIN-LIKE 2.